The chain runs to 76 residues: uncharacterized protein (76 aa).

This is an uncharacterized protein from Thermoproteus tenax virus 1 (strain KRA1) (TTV1).